We begin with the raw amino-acid sequence, 70 residues long: Toxin Boma6d (70 aa).

The LCN-type CS-alpha/beta domain occupies 2 to 68; sequence RDAYIAQNYN…VPIKVEGKCH (67 aa). 4 disulfide bridges follow: Cys-12/Cys-67, Cys-16/Cys-40, Cys-22/Cys-50, and Cys-26/Cys-52.

This sequence belongs to the long (4 C-C) scorpion toxin superfamily. Sodium channel inhibitor family. Alpha subfamily. In terms of tissue distribution, expressed by the venom gland.

It localises to the secreted. Alpha toxins bind voltage-independently at site-3 of sodium channels (Nav) and inhibit the inactivation of the activated channels, thereby blocking neuronal transmission. This chain is Toxin Boma6d, found in Buthus occitanus mardochei (Moroccan scorpion).